We begin with the raw amino-acid sequence, 503 residues long: Maturase K (503 aa).

Belongs to the intron maturase 2 family. MatK subfamily.

Its subcellular location is the plastid. It is found in the chloroplast. Its function is as follows. Usually encoded in the trnK tRNA gene intron. Probably assists in splicing its own and other chloroplast group II introns. The sequence is that of Maturase K from Kunzea baxteri (Scarlet kunzea).